The primary structure comprises 286 residues: ATP synthase gamma chain (286 aa).

This sequence belongs to the ATPase gamma chain family. In terms of assembly, F-type ATPases have 2 components, CF(1) - the catalytic core - and CF(0) - the membrane proton channel. CF(1) has five subunits: alpha(3), beta(3), gamma(1), delta(1), epsilon(1). CF(0) has three main subunits: a, b and c.

The protein localises to the cell inner membrane. In terms of biological role, produces ATP from ADP in the presence of a proton gradient across the membrane. The gamma chain is believed to be important in regulating ATPase activity and the flow of protons through the CF(0) complex. This chain is ATP synthase gamma chain, found in Shewanella sp. (strain ANA-3).